A 262-amino-acid polypeptide reads, in one-letter code: Phosphatidylglycerol--prolipoprotein diacylglyceryl transferase (262 aa).

Helical transmembrane passes span Leu9–Val29, Ile41–Ala61, Ile80–Val100, and Leu109–Leu129. Arg131 is an a 1,2-diacyl-sn-glycero-3-phospho-(1'-sn-glycerol) binding site. 3 helical membrane-spanning segments follow: residues Gln167 to Phe187, Gly197 to Met217, and Gly226 to Ile246.

This sequence belongs to the Lgt family.

It localises to the cell membrane. The catalysed reaction is L-cysteinyl-[prolipoprotein] + a 1,2-diacyl-sn-glycero-3-phospho-(1'-sn-glycerol) = an S-1,2-diacyl-sn-glyceryl-L-cysteinyl-[prolipoprotein] + sn-glycerol 1-phosphate + H(+). Its pathway is protein modification; lipoprotein biosynthesis (diacylglyceryl transfer). In terms of biological role, catalyzes the transfer of the diacylglyceryl group from phosphatidylglycerol to the sulfhydryl group of the N-terminal cysteine of a prolipoprotein, the first step in the formation of mature lipoproteins. The sequence is that of Phosphatidylglycerol--prolipoprotein diacylglyceryl transferase from Streptococcus pneumoniae (strain Taiwan19F-14).